Consider the following 258-residue polypeptide: Type III pantothenate kinase (258 aa).

Position 9-16 (9-16 (DIGNTSVN)) interacts with ATP. 110–113 (GADR) is a binding site for substrate. The active-site Proton acceptor is D112. D132 is a K(+) binding site. T135 serves as a coordination point for ATP. Residue T187 participates in substrate binding.

Belongs to the type III pantothenate kinase family. Homodimer. NH4(+) is required as a cofactor. Requires K(+) as cofactor.

Its subcellular location is the cytoplasm. The enzyme catalyses (R)-pantothenate + ATP = (R)-4'-phosphopantothenate + ADP + H(+). The protein operates within cofactor biosynthesis; coenzyme A biosynthesis; CoA from (R)-pantothenate: step 1/5. Its function is as follows. Catalyzes the phosphorylation of pantothenate (Pan), the first step in CoA biosynthesis. The chain is Type III pantothenate kinase from Dehalococcoides mccartyi (strain ATCC BAA-2266 / KCTC 15142 / 195) (Dehalococcoides ethenogenes (strain 195)).